A 193-amino-acid polypeptide reads, in one-letter code: Anthranilate synthase component 2 (193 aa).

Positions 3-193 constitute a Glutamine amidotransferase type-1 domain; that stretch reads NILFLDNFDS…QQSIEWLLNR (191 aa). Residue 57–59 participates in L-glutamine binding; that stretch reads GPG. Cysteine 84 acts as the Nucleophile; for GATase activity in catalysis. L-glutamine contacts are provided by residues glutamine 88 and 134–135; that span reads SL. Active-site for GATase activity residues include histidine 170 and glutamate 172.

Heterotetramer consisting of two non-identical subunits: a beta subunit (TrpG) and a large alpha subunit (TrpE).

It catalyses the reaction chorismate + L-glutamine = anthranilate + pyruvate + L-glutamate + H(+). It participates in amino-acid biosynthesis; L-tryptophan biosynthesis; L-tryptophan from chorismate: step 1/5. Its function is as follows. Part of a heterotetrameric complex that catalyzes the two-step biosynthesis of anthranilate, an intermediate in the biosynthesis of L-tryptophan. In the first step, the glutamine-binding beta subunit (TrpG) of anthranilate synthase (AS) provides the glutamine amidotransferase activity which generates ammonia as a substrate that, along with chorismate, is used in the second step, catalyzed by the large alpha subunit of AS (TrpE) to produce anthranilate. In the absence of TrpG, TrpE can synthesize anthranilate directly from chorismate and high concentrations of ammonia. The chain is Anthranilate synthase component 2 (trpG) from Haemophilus influenzae (strain ATCC 51907 / DSM 11121 / KW20 / Rd).